Consider the following 274-residue polypeptide: uncharacterized protein (274 aa).

Low complexity predominate over residues 1–17 (MTQLTNFSESFSNQNSN). Disordered regions lie at residues 1–38 (MTQLTNFSESFSNQNSNLHQPYNFNSHQPPEENHYYVR) and 222–274 (ELGT…MEFE). Residues 18–28 (LHQPYNFNSHQ) show a composition bias toward polar residues. Positions 29–38 (PPEENHYYVR) are enriched in basic and acidic residues. Composition is skewed to polar residues over residues 239-249 (PMASPTGSSQI) and 256-265 (SPNSLTNGSV).

This is an uncharacterized protein from Caenorhabditis elegans.